The following is a 1073-amino-acid chain: Envelopment polyprotein (1073 aa).

A signal peptide spans methionine 1 to glycine 19. The Lumenal segment spans residues aspartate 20–tryptophan 453. Cysteine 26 and cysteine 49 are joined by a disulfide. N-linked (GlcNAc...) asparagine; by host glycans are attached at residues asparagine 33 and asparagine 63. 10 disulfide bridges follow: cysteine 143-cysteine 156, cysteine 180-cysteine 327, cysteine 206-cysteine 216, cysteine 258-cysteine 305, cysteine 266-cysteine 303, cysteine 274-cysteine 280, cysteine 287-cysteine 292, cysteine 349-cysteine 352, cysteine 356-cysteine 424, and cysteine 376-cysteine 381. A helical membrane pass occupies residues leucine 454–leucine 474. The interval lysine 475–isoleucine 521 is golgi retention signal. Over lysine 475–glutamate 535 the chain is Cytoplasmic. Residues methionine 536–serine 562 are internal signal sequence for glycoprotein C. 10 disulfide bridges follow: cysteine 563-cysteine 604, cysteine 576-cysteine 586, cysteine 629-cysteine 725, cysteine 644-cysteine 841, cysteine 650-cysteine 698, cysteine 656-cysteine 705, cysteine 660-cysteine 687, cysteine 691-cysteine 696, cysteine 778-cysteine 793, and cysteine 809-cysteine 823. Over cysteine 563–tryptophan 1036 the chain is Lumenal. The fusion loop stretch occupies residues cysteine 650–cysteine 656. Positions cysteine 691–cysteine 705 are fusion loop. N-linked (GlcNAc...) asparagine; by host glycans are attached at residues asparagine 853 and asparagine 914. 3 disulfides stabilise this stretch: cysteine 908/cysteine 978, cysteine 918/cysteine 921, and cysteine 943/cysteine 974. Residue asparagine 936 is glycosylated (N-linked (GlcNAc...) asparagine; by host). Residues isoleucine 1037 to leucine 1057 form a helical membrane-spanning segment. Over phenylalanine 1058–alanine 1073 the chain is Cytoplasmic.

It belongs to the phlebovirus envelope glycoprotein family. Homodimer. Heterodimer with glycoprotein C. Homotrimer (postfusion). As to quaternary structure, heterodimer with glycoprotein N. In terms of processing, specific enzymatic cleavages in vivo yield mature proteins including glycoprotein C and glycoprotein N. Post-translationally, the cytoplasmic tail is Palmitoylated. Glycosylated. In terms of processing, palmitoylated.

The protein resides in the virion membrane. It is found in the host Golgi apparatus membrane. The protein localises to the host endoplasmic reticulum membrane. Its function is as follows. Structural component of the virion that interacts with glycoprotein C. It shields the hydrophobic fusion loops of the glycoprotein C, preventing premature fusion. The glycoprotein protrusions are arranged on an icosahedral lattice, with T=12 triangulation. They are able to attach the virion to the host cell receptor CD209/DC-SIGN and to promote fusion of membranes with the late endosome after clathrin-mediated endocytosis of the virion. Plays a role in the packaging of ribonucleoproteins during virus assembly. In terms of biological role, structural component of the virion that interacts with glycoprotein N. Acts as a class II fusion protein that is activated upon acidification and subsequent repositioning of the glycoprotein N. The glycoprotein protrusions are arranged on an icosahedral lattice, with T=12 triangulation. They are able to attach the virion to the host cell receptor CD209/DC-SIGN and to promote fusion of membranes with the late endosome after clathrin-mediated endocytosis of the virion. The protein is Envelopment polyprotein of Dabie bandavirus (Severe fever with thrombocytopenia virus).